The chain runs to 159 residues: Globin-like protein (159 aa).

The region spanning 1–152 is the Globin domain; it reads MSMNRQEISD…FNAESQTHLK (152 aa). Heme is bound at residue His101.

This sequence belongs to the globin family. As to quaternary structure, homodimer. Expressed mainly in a subset of neuronal cells and in head muscular tissue.

The protein resides in the cytoplasm. May be a globin and may play a role in oxygen transport. The chain is Globin-like protein (glb-1) from Caenorhabditis elegans.